Consider the following 634-residue polypeptide: uncharacterized protein (634 aa).

An N-terminal signal peptide occupies residues methionine 1–alanine 40. Over arginine 41 to glycine 589 the chain is Extracellular. N-linked (GlcNAc...) asparagine glycosylation is present at asparagine 363. A helical transmembrane segment spans residues leucine 590–phenylalanine 610. Residues lysine 611–valine 634 are Cytoplasmic-facing.

The protein localises to the membrane. This is an uncharacterized protein from Bos taurus (Bovine).